The chain runs to 72 residues: Translation initiation factor IF-1 (72 aa).

One can recognise an S1-like domain in the interval 1-72; sequence MSKDDCIEFE…TKGRIIYRMK (72 aa).

It belongs to the IF-1 family. In terms of assembly, component of the 30S ribosomal translation pre-initiation complex which assembles on the 30S ribosome in the order IF-2 and IF-3, IF-1 and N-formylmethionyl-tRNA(fMet); mRNA recruitment can occur at any time during PIC assembly.

The protein resides in the cytoplasm. Functionally, one of the essential components for the initiation of protein synthesis. Stabilizes the binding of IF-2 and IF-3 on the 30S subunit to which N-formylmethionyl-tRNA(fMet) subsequently binds. Helps modulate mRNA selection, yielding the 30S pre-initiation complex (PIC). Upon addition of the 50S ribosomal subunit IF-1, IF-2 and IF-3 are released leaving the mature 70S translation initiation complex. The chain is Translation initiation factor IF-1 from Xylella fastidiosa (strain Temecula1 / ATCC 700964).